Reading from the N-terminus, the 275-residue chain is Beta-lactamase OXA-2 (275 aa).

The first 21 residues, 1 to 21, serve as a signal peptide directing secretion; sequence MAIRIFAILFSIFSLATFAHA. Ser-72 functions as the Acyl-ester intermediate in the catalytic mechanism. An N6-carboxylysine modification is found at Lys-75. 210-212 is a binding site for substrate; the sequence is KTG.

The protein belongs to the class-D beta-lactamase family.

It catalyses the reaction a beta-lactam + H2O = a substituted beta-amino acid. This is an oxacillin-hydrolyzing beta-lactamase. The sequence is that of Beta-lactamase OXA-2 (bla) from Escherichia coli.